A 1484-amino-acid chain; its full sequence is MYSSSNSFLGGANSTRPGQQPYMQQQPPFSQFGQQQPQNQQTGLAPQPTGYNPQFSALGASQLQPQATGFPPGQIQPQYTGFPGVSPQPQQTQPTGFPASPQQTQYGGFPSLGQAPQIQVTSNTNIPLRTGQQTSSEIANSFQNASVATPTPPPKASGGKIPNIRLSFITAQDQAKFEQLFKSAVGDSQAMTGDKAKELLLRSKLPGSDLSRIWVLSDTTKSGQLLFPEFALAMYLCNLRITGRDIPSVLPETIKNEVSSMVDIISFQVPDTQPEPVAKTNVPSFDAPLLENKLAPPAPQQPRPQQPSNSQLLSQLTAQPTGFPPSSGYQANVAVQGQNQGLVPQATVFPGQASSQNLQPPQMGILNNPQPTGYTGPRPPMPPMPTGFGSNLSPSQTGGLVAQPTGIPGQWGFVNAPASGLPNIEALKQQLMPQPGREGGFSAAGLSGNASIPWAITKEEKKIYDDLFRAWDGLHKGFIGGDTAIEIMGQSGLARNDLEAIWTLADPHNRGRLNMDEFAVAMHLIYRKLNGYPVPNRLPPELIPPSTRNLNDSIGTIKSMLSQDAEHRKATGAFLQPQKTGVSYLKEHSFRGGAVSPGAGRKDATLFKNNDEAAAGYRSSARRRVGNSGRTPSPAASQASEEELSVEQLKKKIRETQIMLDAVDFEDENRAEEEDALDRRDRREAESLMDRIRRVQDDIDTHPHAALRSLDTGAERRTLRRQLQAYEDQVPQIASEVRRVEREIAEAKLELFRLKDAKAHPNSALNIVGTGPGGAVTEADRIKARARARMQARAAELAGRPAPASQDDEEAATRRLEGENARVKAEREKNDSMTRDVEESVKEFARSLEDSLKEGEESSTREHERRRWEDALGVEDVIRDFIYDLNRGSRTAHIRKEEDSRGSSLEPRSRESSAHTSTAARPSPPASVGLTGASPVTHEDRVAAARERAQRRIAERMAAAGLKPQTDAIETLAQRQERERREREERVKRAEEEDAKREQERQRRIAEEQRTPSTQAAKPAGKKPPPAPPRGSRKGRTDSTGQADAKKAAEGSAKTEQLALEQALKEEQQAQEEETKRLETEAKQREDEFAREQQEQEARLRALEEQVRQGKIKKQEEKRRREEAKKAAQEQEARLARQRAELEAAKERERQLQLELEGLDESSSDEEGPVDIATPQDSTPTQSQVLPATSDPEPPAPPTPVAEPPTVPEPEQTTASSSPESSRAVSLRLSPETESKNPYFRRNVSQPTDYPPPTPPEVPQVSSTQMPDTQSTNPFHRLAQQQQPPPPPPTQPAFTGSAPLARKTRARPEADDDWSAAESDFESSDDEDDRAGGGSAKQLASILFGTMAPPRPLSAMDTQSPSSKSATPVQGSSIPPVPPIPAEIEPSSVADGASPPPPPPPPPPPPPAAAPPPLPSAESPAGIPPPPPPPMAPPAPPPPPGPPAAAPAGAPDRSALLASIQAGKGLRKVQTNDRSTSTSAGRVL.

Polar residues predominate over residues M1–R16. The tract at residues M1–S100 is disordered. The segment covering P17 to Q47 has biased composition (low complexity). A compositionally biased stretch (polar residues) spans T49–A67. The EH 1 domain occupies D173–M261. In terms of domain architecture, EF-hand 1 spans L205–R240. Disordered regions lie at residues L289 to A331 and G351 to M384. The segment covering P296 to Q305 has biased composition (pro residues). Low complexity predominate over residues Q306–L316. The segment covering Q352–Q370 has biased composition (polar residues). One can recognise an EH 2 domain in the interval E460–N549. The EF-hand 2 domain occupies L493–K528. Disordered stretches follow at residues A615 to E643, R793 to R866, and H893 to L1484. Over residues S628 to A639 the composition is skewed to polar residues. 2 coiled-coil regions span residues A635–H760 and D807–E843. 5 stretches are compositionally biased toward basic and acidic residues: residues A811 to R866, I894 to S913, T937 to E955, R975 to R1010, and A1063 to L1152. 2 coiled-coil regions span residues Q965–T1011 and S1052–D1165. The span at E1157 to P1169 shows a compositional bias: acidic residues. A compositionally biased stretch (polar residues) spans P1175–P1187. Residues P1192–P1208 show a composition bias toward pro residues. The span at E1209–S1222 shows a compositional bias: low complexity. Over residues D1249–V1258 the composition is skewed to pro residues. Residues Q1265–P1274 show a composition bias toward polar residues. A compositionally biased stretch (acidic residues) spans A1310–D1329. Polar residues predominate over residues M1356 to G1371. Positions A1382–A1393 are enriched in low complexity. Pro residues-rich tracts occupy residues S1394–P1415 and G1422–A1445. The 18-residue stretch at D1452–V1469 folds into the WH2 domain. Over residues N1472–L1484 the composition is skewed to polar residues.

The protein belongs to the PAN1 family. Component of the PAN1 actin cytoskeleton-regulatory complex.

The protein localises to the cell membrane. The protein resides in the endosome membrane. Its subcellular location is the cytoplasm. It is found in the cytoskeleton. It localises to the actin patch. In terms of biological role, component of the PAN1 actin cytoskeleton-regulatory complex required for the internalization of endosomes during actin-coupled endocytosis. The complex links the site of endocytosis to the cell membrane-associated actin cytoskeleton. Mediates uptake of external molecules and vacuolar degradation of plasma membrane proteins. Plays a role in the proper organization of the cell membrane-associated actin cytoskeleton and promotes its destabilization. The protein is Actin cytoskeleton-regulatory complex protein pan1 (pan1) of Emericella nidulans (strain FGSC A4 / ATCC 38163 / CBS 112.46 / NRRL 194 / M139) (Aspergillus nidulans).